Here is a 38-residue protein sequence, read N- to C-terminus: Large ribosomal subunit protein bL36c (38 aa).

This sequence belongs to the bacterial ribosomal protein bL36 family.

It localises to the plastid. The protein resides in the apicoplast. The sequence is that of Large ribosomal subunit protein bL36c (rpl36) from Theileria parva (East coast fever infection agent).